The chain runs to 65 residues: Large ribosomal subunit protein bL35 (65 aa).

The segment at 1–65 (MQKIKTNRSA…KELKRLLPGM (65 aa)) is disordered. Basic residues-rich tracts occupy residues 10-19 (AAKRFKRTKS) and 33-47 (LTKK…LRKS). Residues 54–65 (NNKELKRLLPGM) are compositionally biased toward basic and acidic residues.

The protein belongs to the bacterial ribosomal protein bL35 family.

The protein is Large ribosomal subunit protein bL35 of Desulfosudis oleivorans (strain DSM 6200 / JCM 39069 / Hxd3) (Desulfococcus oleovorans).